Consider the following 92-residue polypeptide: Small ribosomal subunit protein uS19 (92 aa).

The protein belongs to the universal ribosomal protein uS19 family.

In terms of biological role, protein S19 forms a complex with S13 that binds strongly to the 16S ribosomal RNA. The polypeptide is Small ribosomal subunit protein uS19 (Bifidobacterium animalis subsp. lactis (strain AD011)).